The sequence spans 164 residues: Phosphopantetheine adenylyltransferase (164 aa).

Residue threonine 10 coordinates substrate. ATP-binding positions include 10–11 (TF) and histidine 18. Residues lysine 42, threonine 79, and arginine 93 each contribute to the substrate site. ATP-binding positions include 94–96 (GLR), glutamate 104, and 129–135 (NQIISSR).

The protein belongs to the bacterial CoaD family. In terms of assembly, homohexamer. Requires Mg(2+) as cofactor.

Its subcellular location is the cytoplasm. It carries out the reaction (R)-4'-phosphopantetheine + ATP + H(+) = 3'-dephospho-CoA + diphosphate. Its pathway is cofactor biosynthesis; coenzyme A biosynthesis; CoA from (R)-pantothenate: step 4/5. Its function is as follows. Reversibly transfers an adenylyl group from ATP to 4'-phosphopantetheine, yielding dephospho-CoA (dPCoA) and pyrophosphate. This chain is Phosphopantetheine adenylyltransferase, found in Pelagibacter ubique (strain HTCC1062).